Here is a 559-residue protein sequence, read N- to C-terminus: Endoglin (559 aa).

The N-terminal stretch at 1 to 20 (MKSICCVLVLCLLLCRRSTA) is a signal peptide. Residues 21–473 (SESICELKDV…SCFEFGLSAV (453 aa)) lie on the Extracellular side of the membrane. 2 disulfide bridges follow: Cys25–Cys201 and Cys47–Cys174. N-linked (GlcNAc...) asparagine glycosylation is found at Asn55, Asn79, Asn109, Asn133, Asn170, Asn302, and Asn352. A disulfide bridge links Cys381 with Cys427. A helical transmembrane segment spans residues 474 to 494 (LGIAFGGFLIGVLLTGALWFI). The Cytoplasmic portion of the chain corresponds to 495–559 (KIRTGHPVAL…TQSTPTSSMA (65 aa)). Residues 528–559 (RQPVPTHPSPSENSSANASIGSTQSTPTSSMA) form a disordered region. The segment covering 536-546 (SPSENSSANAS) has biased composition (low complexity). The segment covering 547-559 (IGSTQSTPTSSMA) has biased composition (polar residues).

Homodimer; disulfide-linked.

It is found in the cell membrane. Functionally, vascular endothelium glycoprotein that plays an important role in the regulation of angiogenesis. Required for normal structure and integrity of adult vasculature. Important for endothelial cell shape changes in response to blood flow, which drive vascular remodeling and establishment of normal vascular morphology during angiogenesis. The protein is Endoglin of Danio rerio (Zebrafish).